The chain runs to 211 residues: Uridine kinase (211 aa).

Residue Gly12 to Thr19 coordinates ATP.

It belongs to the uridine kinase family.

It is found in the cytoplasm. It carries out the reaction uridine + ATP = UMP + ADP + H(+). The enzyme catalyses cytidine + ATP = CMP + ADP + H(+). Its pathway is pyrimidine metabolism; CTP biosynthesis via salvage pathway; CTP from cytidine: step 1/3. It participates in pyrimidine metabolism; UMP biosynthesis via salvage pathway; UMP from uridine: step 1/1. The sequence is that of Uridine kinase from Halalkalibacterium halodurans (strain ATCC BAA-125 / DSM 18197 / FERM 7344 / JCM 9153 / C-125) (Bacillus halodurans).